Here is a 217-residue protein sequence, read N- to C-terminus: Small ribosomal subunit protein uS3 (217 aa).

Residues 38–106 (IRKFIDNELK…KVHINVIEIK (69 aa)) form the KH type-2 domain.

The protein belongs to the universal ribosomal protein uS3 family. As to quaternary structure, part of the 30S ribosomal subunit. Forms a tight complex with proteins S10 and S14.

In terms of biological role, binds the lower part of the 30S subunit head. Binds mRNA in the 70S ribosome, positioning it for translation. The polypeptide is Small ribosomal subunit protein uS3 (Staphylococcus haemolyticus (strain JCSC1435)).